The following is a 107-amino-acid chain: EPIDERMAL PATTERNING FACTOR-like protein 5 (107 aa).

Positions 1–22 are cleaved as a signal peptide; the sequence is MGVVLPTLIVYAFLLFFSSSSA. 3 cysteine pairs are disulfide-bonded: Cys-64-Cys-98, Cys-68-Cys-74, and Cys-71-Cys-100.

This sequence belongs to the plant cysteine rich small secretory peptide family. Epidermal patterning factor subfamily. As to quaternary structure, interacts with ERECTA. Expressed asymetically in the hypocotyl, on the side proximal to the folded cotyledons at germination. Detected in developing flowers, the chalazal region of ovules and near the root apex, but not in inflorescence stems. Expressed in cotyledons, flowers, adult leaves and fruits.

The protein localises to the secreted. Controls stomatal patterning. Mediates differentiation of stomatal lineage cells to pavement cells and stomatal development inhibition. TMM (AC Q9SSD1) functions to dampen or block CLL1 signaling. Acts as a growth-regulatory ligand for ERECTA family receptors. Promotes fruit growth and fertility. The protein is EPIDERMAL PATTERNING FACTOR-like protein 5 of Arabidopsis thaliana (Mouse-ear cress).